Consider the following 331-residue polypeptide: Probable tRNA pseudouridine synthase B (331 aa).

Residues 1–15 (MRCSQREVFVKREEP) show a composition bias toward basic and acidic residues. The segment at 1–27 (MRCSQREVFVKREEPTNPEWGKPPSQR) is disordered. D71 acts as the Nucleophile in catalysis. Residues 238–313 (LPKIWVRDSA…AVVRTDRVVM (76 aa)) enclose the PUA domain.

The protein belongs to the pseudouridine synthase TruB family. Type 2 subfamily.

It catalyses the reaction uridine(55) in tRNA = pseudouridine(55) in tRNA. Functionally, could be responsible for synthesis of pseudouridine from uracil-55 in the psi GC loop of transfer RNAs. The sequence is that of Probable tRNA pseudouridine synthase B from Pyrobaculum arsenaticum (strain DSM 13514 / JCM 11321 / PZ6).